Reading from the N-terminus, the 276-residue chain is MKKIYLCAISNIRSGACNEDCKFCTQSVKWGADINRYKQKDLKTIVNEAKLAKKNGATGFCLVTSGKGLDDKTLEYVCSAAKSVIKEVDISIIACNGTAGKDSLKELKKAGVKIYNHNLETSREYYPKICSTHTWDERFETCENIKSVGLQLCCGGIFGMGESNEDIESFIRSLKELKPNGIPLNFFIENEKLPLKATHNKDFALKTVKRFANEFKEAIIMLAGGREIVFGNEWTEALKVGANSIVIGDYLTTKGERPDRDLEILLNEGFEIANEC.

A Radical SAM core domain is found at 1-226 (MKKIYLCAIS…EAIIMLAGGR (226 aa)). Positions 17, 21, and 24 each coordinate [4Fe-4S] cluster. Residues C61, C95, and C153 each coordinate [2Fe-2S] cluster.

The protein belongs to the radical SAM superfamily. Biotin synthase family. In terms of assembly, homodimer. The cofactor is [4Fe-4S] cluster. Requires [2Fe-2S] cluster as cofactor.

It carries out the reaction (4R,5S)-dethiobiotin + (sulfur carrier)-SH + 2 reduced [2Fe-2S]-[ferredoxin] + 2 S-adenosyl-L-methionine = (sulfur carrier)-H + biotin + 2 5'-deoxyadenosine + 2 L-methionine + 2 oxidized [2Fe-2S]-[ferredoxin]. It functions in the pathway cofactor biosynthesis; biotin biosynthesis; biotin from 7,8-diaminononanoate: step 2/2. Catalyzes the conversion of dethiobiotin (DTB) to biotin by the insertion of a sulfur atom into dethiobiotin via a radical-based mechanism. This is Biotin synthase from Nautilia profundicola (strain ATCC BAA-1463 / DSM 18972 / AmH).